A 141-amino-acid polypeptide reads, in one-letter code: Putative pre-16S rRNA nuclease (141 aa).

This sequence belongs to the YqgF nuclease family.

It is found in the cytoplasm. Could be a nuclease involved in processing of the 5'-end of pre-16S rRNA. The chain is Putative pre-16S rRNA nuclease from Vibrio parahaemolyticus serotype O3:K6 (strain RIMD 2210633).